Reading from the N-terminus, the 280-residue chain is Diaminopimelate epimerase (280 aa).

Positions 13 and 67 each coordinate substrate. Cys-76 serves as the catalytic Proton donor. Residues Gly-77–Asn-78, Asn-191, and Glu-208–Arg-209 contribute to the substrate site. Cys-218 functions as the Proton acceptor in the catalytic mechanism. Substrate is bound at residue Gly-219–Thr-220.

It belongs to the diaminopimelate epimerase family. In terms of assembly, homodimer.

Its subcellular location is the cytoplasm. The catalysed reaction is (2S,6S)-2,6-diaminopimelate = meso-2,6-diaminopimelate. The protein operates within amino-acid biosynthesis; L-lysine biosynthesis via DAP pathway; DL-2,6-diaminopimelate from LL-2,6-diaminopimelate: step 1/1. In terms of biological role, catalyzes the stereoinversion of LL-2,6-diaminopimelate (L,L-DAP) to meso-diaminopimelate (meso-DAP), a precursor of L-lysine. This is Diaminopimelate epimerase from Archaeoglobus fulgidus (strain ATCC 49558 / DSM 4304 / JCM 9628 / NBRC 100126 / VC-16).